Reading from the N-terminus, the 598-residue chain is Aspartate--tRNA(Asp/Asn) ligase (598 aa).

Glutamate 170 contributes to the L-aspartate binding site. The segment at glutamine 194–lysine 197 is aspartate. An L-aspartate-binding site is contributed by arginine 216. ATP-binding positions include arginine 216–glutamate 218 and glutamine 225. Histidine 448 serves as a coordination point for L-aspartate. Position 482 (glutamate 482) interacts with ATP. Residue arginine 489 participates in L-aspartate binding. Glycine 534 to arginine 537 serves as a coordination point for ATP. The tract at residues glycine 558 to alanine 598 is disordered. A compositionally biased stretch (basic and acidic residues) spans glutamine 575–alanine 598.

The protein belongs to the class-II aminoacyl-tRNA synthetase family. Type 1 subfamily. In terms of assembly, homodimer.

The protein localises to the cytoplasm. The enzyme catalyses tRNA(Asx) + L-aspartate + ATP = L-aspartyl-tRNA(Asx) + AMP + diphosphate. Aspartyl-tRNA synthetase with relaxed tRNA specificity since it is able to aspartylate not only its cognate tRNA(Asp) but also tRNA(Asn). Reaction proceeds in two steps: L-aspartate is first activated by ATP to form Asp-AMP and then transferred to the acceptor end of tRNA(Asp/Asn). The chain is Aspartate--tRNA(Asp/Asn) ligase from Mycolicibacterium smegmatis (strain ATCC 700084 / mc(2)155) (Mycobacterium smegmatis).